We begin with the raw amino-acid sequence, 829 residues long: Cation/H(+) antiporter 14 (829 aa).

The next 12 helical transmembrane spans lie at 48-68, 77-97, 117-137, 145-165, 180-200, 215-235, 240-260, 281-301, 329-349, 361-383, 392-412, and 425-445; these read YAMP…RLLY, GMIS…FGQS, SNLG…ASII, ILIG…TVLF, ISTV…TVLA, NCSI…RMFL, LASV…FFVC, IPFF…EVLG, LEMF…GLQT, IIEA…ASAY, FSLA…CVMW, and LLII…VCLY. S827 is subject to Phosphoserine.

This sequence belongs to the monovalent cation:proton antiporter 2 (CPA2) transporter (TC 2.A.37) family. CHX (TC 2.A.37.4) subfamily. Preferentially expressed in pollen but also detected in vegetative tissues like leaf trichomes and root vascular tissues.

The protein resides in the membrane. Functionally, may operate as a cation/H(+) antiporter. This is Cation/H(+) antiporter 14 (CHX14) from Arabidopsis thaliana (Mouse-ear cress).